We begin with the raw amino-acid sequence, 208 residues long: Large ribosomal subunit protein uL3 (208 aa).

A disordered region spans residues 123 to 146; that stretch reads RHGQSRGPMAHGSRYHRRPGSMGP.

It belongs to the universal ribosomal protein uL3 family. In terms of assembly, part of the 50S ribosomal subunit. Forms a cluster with proteins L14 and L19.

Its function is as follows. One of the primary rRNA binding proteins, it binds directly near the 3'-end of the 23S rRNA, where it nucleates assembly of the 50S subunit. This chain is Large ribosomal subunit protein uL3, found in Streptococcus thermophilus (strain CNRZ 1066).